A 457-amino-acid chain; its full sequence is MPKVQADGLPLPQRYGAILTIVIGISMAVLDGAIANVALPTIATDLHATPASSIWVVNAYQIAIVISLLSFSFLGDMFGYRRIYKCGLVVFLLSSLFCALSDSLQMLTLARVIQGFGGAALMSVNTALIRLIYPQRFLGRGMGINSFIVAVSSAAGPTIAAAILSIASWKWLFLINVPLGIIALLLAMRFLPPNGSRASKPRFDLPSAVMNALTFGLLITALSGFAQGQSLTLIAAELVVMVVVGIFFIRRQLSLPVPLLPVDLLRIPLFSLSICTSVCSFCAQMLAMVSLPFYLQTVLGRSEVETGLLLTPWPLATMVMAPLAGYLIERVHAGLLGALGLFIMAAGLFSLVLLPASPADINIIWPMILCGAGFGLFQSPNNHTIITSAPRERSGGASGMLGTARLLGQSSGAALVALMLNQFGDNGTHVSLMAAAILAVIAACVSGLRITQPRSRA.

14 consecutive transmembrane segments (helical) span residues 15 to 35 (YGAI…GAIA), 54 to 74 (IWVV…FSFL), 87 to 107 (GLVV…LQML), 112 to 132 (VIQG…IRLI), 144 to 164 (INSF…AAIL), 166 to 186 (IASW…ALLL), 205 to 225 (LPSA…LSGF), 229 to 249 (QSLT…IFFI), 269 to 289 (LFSL…LAMV), 308 to 328 (LLLT…GYLI), 334 to 354 (GLLG…LVLL), 357 to 377 (SPAD…FGLF), 400 to 420 (MLGT…ALML), and 428 to 448 (THVS…VSGL).

It belongs to the major facilitator superfamily. TCR/Tet family.

It is found in the cell inner membrane. This is an uncharacterized protein from Escherichia coli (strain K12).